The chain runs to 116 residues: Ribonuclease P protein component (116 aa).

It belongs to the RnpA family. In terms of assembly, consists of a catalytic RNA component (M1 or rnpB) and a protein subunit.

It catalyses the reaction Endonucleolytic cleavage of RNA, removing 5'-extranucleotides from tRNA precursor.. Functionally, RNaseP catalyzes the removal of the 5'-leader sequence from pre-tRNA to produce the mature 5'-terminus. It can also cleave other RNA substrates such as 4.5S RNA. The protein component plays an auxiliary but essential role in vivo by binding to the 5'-leader sequence and broadening the substrate specificity of the ribozyme. The chain is Ribonuclease P protein component from Bacillus velezensis (strain DSM 23117 / BGSC 10A6 / LMG 26770 / FZB42) (Bacillus amyloliquefaciens subsp. plantarum).